The primary structure comprises 118 residues: UPF0342 protein Hore_03100 (118 aa).

This sequence belongs to the UPF0342 family.

This Halothermothrix orenii (strain H 168 / OCM 544 / DSM 9562) protein is UPF0342 protein Hore_03100.